The sequence spans 246 residues: UPF0246 protein stu1967 (246 aa).

This sequence belongs to the UPF0246 family.

The polypeptide is UPF0246 protein stu1967 (Streptococcus thermophilus (strain ATCC BAA-250 / LMG 18311)).